Reading from the N-terminus, the 514-residue chain is Peptide chain release factor 3 (514 aa).

The region spanning 8–268 is the tr-type G domain; the sequence is KKRRTFAIIS…TFLEFAPEPH (261 aa). GTP is bound by residues 17–24, 85–89, and 139–142; these read SHPDAGKT, DTPGH, and NKLD.

Belongs to the TRAFAC class translation factor GTPase superfamily. Classic translation factor GTPase family. PrfC subfamily.

It is found in the cytoplasm. In terms of biological role, increases the formation of ribosomal termination complexes and stimulates activities of RF-1 and RF-2. It binds guanine nucleotides and has strong preference for UGA stop codons. It may interact directly with the ribosome. The stimulation of RF-1 and RF-2 is significantly reduced by GTP and GDP, but not by GMP. This chain is Peptide chain release factor 3, found in Streptococcus pyogenes serotype M28 (strain MGAS6180).